The following is a 267-amino-acid chain: uncharacterized protein (267 aa).

Residues 37-62 (DSSNNYKKKYKKYKRKYIDLKKQLNY) adopt a coiled-coil conformation.

This is an uncharacterized protein from Acanthamoeba polyphaga (Amoeba).